A 188-amino-acid chain; its full sequence is Large ribosomal subunit protein uL10 (188 aa).

It belongs to the universal ribosomal protein uL10 family. In terms of assembly, part of the ribosomal stalk of the 50S ribosomal subunit. The N-terminus interacts with L11 and the large rRNA to form the base of the stalk. The C-terminus forms an elongated spine to which L12 dimers bind in a sequential fashion forming a multimeric L10(L12)X complex.

Its function is as follows. Forms part of the ribosomal stalk, playing a central role in the interaction of the ribosome with GTP-bound translation factors. In Crocosphaera subtropica (strain ATCC 51142 / BH68) (Cyanothece sp. (strain ATCC 51142)), this protein is Large ribosomal subunit protein uL10.